A 303-amino-acid polypeptide reads, in one-letter code: Lysosomal amino acid transporter 1 homolog (303 aa).

Over 1 to 38 the chain is Lumenal; that stretch reads MAEGLRAPPPPGNGSECPDGARWVLRLLGECARDGRDV. N-linked (GlcNAc...) asparagine glycosylation is present at N13. One can recognise a PQ-loop 1 domain in the interval 36 to 102; the sequence is RDVGSALLGL…LANQLPLQVY (67 aa). The helical transmembrane segment at 39 to 59 threads the bilayer; it reads GSALLGLLSIGCFAAAALPQF. At 60-73 the chain is on the cytoplasmic side; that stretch reads YQACKTGIMDRALS. Residues 74 to 94 form a helical membrane-spanning segment; the sequence is IYFLLGWLGGDLLNLIGSFLA. The Lumenal segment spans residues 95–96; sequence NQ. The helical transmembrane segment at 97–117 threads the bilayer; the sequence is LPLQVYTAVYYVLADLVMLSL. Over 118-131 the chain is Cytoplasmic; the sequence is YGYYKAKNWGTGAT. A helical membrane pass occupies residues 132–152; it reads ASINAACLFCLLGTATTLTVL. Topologically, residues 153–182 are lumenal; that stretch reads SHDTGPAPNPAAFGGRSLLSLGLEGPGPEP. The helical transmembrane segment at 183–203 threads the bilayer; the sequence is ISKTEIIGFAIGSISSVLYLC. The 66-residue stretch at 186-251 folds into the PQ-loop 2 domain; the sequence is TEIIGFAIGS…LKNPEPGQSE (66 aa). Residues 204–220 lie on the Cytoplasmic side of the membrane; the sequence is SRLPQIYTNYRRKSTAG. A helical membrane pass occupies residues 221–241; it reads VSFLLFALVMLGNLLYGTSVL. The Lumenal portion of the chain corresponds to 242–260; it reads LKNPEPGQSEGDYILHHLP. Residues 261–281 traverse the membrane as a helical segment; that stretch reads WLIGSLGVLSLDVIISFQFLA. The Cytoplasmic segment spans residues 282–303; that stretch reads YRTGQPSAGEEREALLAEHGDS. The Di-leucine motif motif lies at 296-297; that stretch reads LL.

It belongs to the laat-1 family.

It is found in the lysosome membrane. Functionally, amino acid transporter that specifically mediates the pH-dependent export of the cationic amino acids arginine, histidine and lysine from lysosomes. The chain is Lysosomal amino acid transporter 1 homolog (SLC66A1) from Gallus gallus (Chicken).